Reading from the N-terminus, the 102-residue chain is MNREITFFGRFEADILADRKTITIRDSSESDFRSGEVLRVCRNEDGVFFCHIKVKSVTPVTLDGLSERHAEQENMSLDELKKVIKAIYPGLDRFYVIEFTRC.

Positions 6 to 92 (TFFGRFEADI…VIKAIYPGLD (87 aa)) constitute an ASCH domain. The active-site Proton acceptor is K20. Catalysis depends on T23, which acts as the Nucleophile. Catalysis depends on E73, which acts as the Proton donor.

It belongs to the N(4)-acetylcytidine amidohydrolase family.

The catalysed reaction is N(4)-acetylcytidine + H2O = cytidine + acetate + H(+). The enzyme catalyses N(4)-acetyl-2'-deoxycytidine + H2O = 2'-deoxycytidine + acetate + H(+). It catalyses the reaction N(4)-acetylcytosine + H2O = cytosine + acetate + H(+). In terms of biological role, catalyzes the hydrolysis of N(4)-acetylcytidine (ac4C). The protein is N(4)-acetylcytidine amidohydrolase of Yersinia pseudotuberculosis serotype O:1b (strain IP 31758).